The chain runs to 381 residues: MRNSGSSCSESVGPPLWLLAELTYRCPLQCPYCSNPLEFAREGAELSTAEWIEVFRQARELGAAQLGFSGGEPLLRQDLAELIEAGRGLGFYTNLITSGIGLDEARLARFAEAGLDHVQISFQAADEEVNNLLAGSRKAFAQKLAMARAVKAHGYPMVLNFVTHRHNIDNIERIIQLCIELEADYVELATCQFYGWAALNRAGLLPTRAQLERAERITAEYRQRLAAEGNPCKLIFVTPDYYEERPKACMGGWASVFLDITPDGTALPCHSARQLPVQFPNVREHSLRHIWYESFGFNRYRGDAWMPEPCRSCEEKERDHGGCRCQAFLLTGDADATDPVCAKSARHDLILAARRQAEEAPLGLDALTWRNQRASRLICKA.

The 217-residue stretch at 12 to 228 folds into the Radical SAM core domain; sequence VGPPLWLLAE…AEYRQRLAAE (217 aa). [4Fe-4S] cluster-binding residues include cysteine 26, cysteine 30, and cysteine 33.

The protein belongs to the radical SAM superfamily. PqqE family. Interacts with PqqD. The interaction is necessary for activity of PqqE. It depends on [4Fe-4S] cluster as a cofactor.

The enzyme catalyses [PQQ precursor protein] + S-adenosyl-L-methionine = E-Y cross-linked-[PQQ precursor protein] + 5'-deoxyadenosine + L-methionine + H(+). It participates in cofactor biosynthesis; pyrroloquinoline quinone biosynthesis. Functionally, catalyzes the cross-linking of a glutamate residue and a tyrosine residue in the PqqA protein as part of the biosynthesis of pyrroloquinoline quinone (PQQ). The protein is PqqA peptide cyclase of Pseudomonas aeruginosa (strain LESB58).